A 301-amino-acid chain; its full sequence is POU domain, class 6, transcription factor 1 (301 aa).

2 tandem repeats follow at residues 11-17 and 50-56. The interval 11 to 56 is 2 X 7 AA repeats of N-A-Q-G-Q-V-I; the sequence is NAQGQVIGALPWVVNSASVATPAPAQSLQVQAVTPQLLLNAQGQVI. The tract at residues 66-88 is disordered; the sequence is QPVAVRKPSTPESPAKSEVQPIQ. The POU-specific domain maps to 139–213; it reads EDGINLEEIR…VLEKWLNEAE (75 aa). The homeobox DNA-binding region spans 234 to 293; sequence KRKRRTSFTPQAIEALNAYFEKNPLPTGQEITEIAKELNYDREVVRVWFCNRRQTLKNTS.

The protein belongs to the POU transcription factor family. Class-6 subfamily. In terms of tissue distribution, in the embryo, widely expressed, with highest levels in the developing brain and spinal cord. In the adult, mostly found in the brain, where it is diffusely expressed with the exception of an enrichment in layer IV of the neocortex. Also found in kidney, lung, heart, adrenal, skin, and placenta. Low levels in spleen, muscle, liver, anterior pituitary, testis and ovary.

It is found in the nucleus. Its function is as follows. Transcription factor that binds preferentially to a variant of the octamer motif (5'-ATGATAAT-3'). In Rattus norvegicus (Rat), this protein is POU domain, class 6, transcription factor 1 (Pou6f1).